The following is a 186-amino-acid chain: Elongation factor P (186 aa).

It belongs to the elongation factor P family.

Its subcellular location is the cytoplasm. The protein operates within protein biosynthesis; polypeptide chain elongation. Functionally, involved in peptide bond synthesis. Stimulates efficient translation and peptide-bond synthesis on native or reconstituted 70S ribosomes in vitro. Probably functions indirectly by altering the affinity of the ribosome for aminoacyl-tRNA, thus increasing their reactivity as acceptors for peptidyl transferase. The protein is Elongation factor P of Streptococcus sanguinis (strain SK36).